A 48-amino-acid polypeptide reads, in one-letter code: Large ribosomal subunit protein bL33A (48 aa).

This sequence belongs to the bacterial ribosomal protein bL33 family.

In Streptococcus agalactiae serotype V (strain ATCC BAA-611 / 2603 V/R), this protein is Large ribosomal subunit protein bL33A.